A 441-amino-acid polypeptide reads, in one-letter code: DNA double-strand break repair protein Mre11 (441 aa).

Mn(2+) is bound by residues Asp9, His11, Asp50, and Asn85. His86 functions as the Proton donor in the catalytic mechanism. Mn(2+)-binding residues include His150, Asp181, and His183. A disordered region spans residues 360–441 (ESLLSDDPDA…SRDSSLGDFA (82 aa)). Composition is skewed to acidic residues over residues 379–403 (AEAE…EDTA) and 411–425 (TDTD…DSET).

Belongs to the MRE11/RAD32 family. In terms of assembly, homodimer. Forms a heterotetramer composed of two Mre11 subunits and two Rad50 subunits. Mn(2+) serves as cofactor.

Its activity is regulated as follows. Nuclease activity is regulated by Rad50. In terms of biological role, part of the Rad50/Mre11 complex, which is involved in the early steps of DNA double-strand break (DSB) repair. Mre11 binds to DSB ends and has both double-stranded 3'-5' exonuclease activity and single-stranded endonuclease activity. In polyploid organisms, the Rad50/Mre11 complex appears to restrain the repair of double-strand breaks by homologous recombination, allowing another pathway to act as the primary mode of repair. In Haloferax volcanii (strain ATCC 29605 / DSM 3757 / JCM 8879 / NBRC 14742 / NCIMB 2012 / VKM B-1768 / DS2) (Halobacterium volcanii), this protein is DNA double-strand break repair protein Mre11.